The following is an 835-amino-acid chain: Ribonucleoside-diphosphate reductase large subunit (835 aa).

Substrate is bound by residues S222, 237–238, G266, 447–451, and 660–664; these read SC, NLCCE, and PSASS. The cysteines at positions 238 and 464 are disulfide-linked. Catalysis depends on N447, which acts as the Proton acceptor. C449 acts as the Cysteine radical intermediate in catalysis. Residue E451 is the Proton acceptor of the active site.

The protein belongs to the ribonucleoside diphosphate reductase large chain family. As to quaternary structure, heterotetramer composed of a homodimer of the large subunit (R1) and a homodimer of the small subunit (R2). Larger multisubunit protein complex are also active, composed of (R1)n(R2)n.

The enzyme catalyses a 2'-deoxyribonucleoside 5'-diphosphate + [thioredoxin]-disulfide + H2O = a ribonucleoside 5'-diphosphate + [thioredoxin]-dithiol. Ribonucleoside-diphosphate reductase holoenzyme provides the precursors necessary for viral DNA synthesis. Allows virus growth in non-dividing cells. Catalyzes the biosynthesis of deoxyribonucleotides from the corresponding ribonucleotides. This chain is Ribonucleoside-diphosphate reductase large subunit, found in Magallana gigas (Pacific oyster).